An 843-amino-acid chain; its full sequence is MATRKAGSRLETEIERCRSECQWERIPELVKQLSAKLIANDDMAELLLGESKLEQHLKEKPLRQGASPRGPRPQLTEVRKHLTAALDRGNLKSEFLQESNLVMAKLTYVEGDYKEALNIYARVGLDDLPLTAVPPYRLRMIAEAYATKGLCLEKLPVSSSTSNLHVDREQDVITCYEKAGDIALLYLQEIERVMLTNIQNRSPKPGPAPHDQELGFFLETGLQRAHVLYFKNGNLTRGVGRFRELLRAVETRTTQNLRMTIARQLAEILLRGMCEQSYWSPLEEPPYQSPLDDPLRKGANTKAYTLPRRARVYSGENIFCPQENTEEALLLLLISESMANRDAVLSRIPEHKSDRLISLQSASVVYDLLTIALGRRGQYEMLSECLERAMKFAFEEFHLWYQFALSLMAAGKSARAVKVLKECIRLKPDDATIPLLAAKLCVGSLHWLEEAEKFAKTVVDVGEKTSEFKAKGYLALGLTYSLQATDASLRGMQEGLQRKALLAFQRAHSLSPTDHQAAFYLALQLAISRQIPEALGYVRQALQLQGDDANSLHLLALLLSAQKHYHDALNIIDMALSEYPENFILLFSKVKLESLCRGPDEALLTCKHMLQIWKSCYNLTNPSDSGRGSSLLDRTIADRRQLNTITLPDFSDPETGSVHATSVAASRVEQALSEVASSLQSSAPKQGPLHPWMTLAQIWLHAAEVYIGIGKPAEATACTQEAANLFPMSHNVLYMRGQVAELRGHFDEARRWYEEALSISPTHVKSMQRLALVLHQLGRYSLAEKILRDAVQVNSTAHEVWNGLGEVLQAQGNDAAATECFLTALELEASSPAVPFTVIPRVL.

A TPR 1 repeat occupies 97–131; sequence QESNLVMAKLTYVEGDYKEALNIYARVGLDDLPLT. Phosphoserine is present on residues Ser-160 and Ser-202. TPR repeat units follow at residues 219-252, 363-396, 397-430, 479-514, 516-548, and 549-582; these read ETGLQRAHVLYFKNGNLTRGVGRFRELLRAVETR, SVVYDLLTIALGRRGQYEMLSECLERAMKFAFEE, FHLWYQFALSLMAAGKSARAVKVLKECIRLKPDD, TYSLQATDASLRGMQEGLQRKALLAFQRAHSLSPTD, QAAFYLALQLAISRQIPEALGYVRQALQLQGDD, and ANSLHLLALLLSAQKHYHDALNIIDMALSEYPEN. Residues Ser-625, Ser-629, Ser-630, Ser-673, Ser-677, Ser-678, and Ser-681 each carry the phosphoserine modification. TPR repeat units lie at residues 696-729, 730-763, 765-797, and 798-831; these read AQIWLHAAEVYIGIGKPAEATACTQEAANLFPMS, HNVLYMRGQVAELRGHFDEARRWYEEALSISPTH, KSMQRLALVLHQLGRYSLAEKILRDAVQVNSTA, and HEVWNGLGEVLQAQGNDAAATECFLTALELEASS.

In terms of assembly, component of a phosphatidylinositol 4-kinase (PI4K) complex, composed of PI4KA, EFR3 (EFR3A or EFR3B), TTC7 (TTC7A or TTC7B) and HYCC (HYCC1 or HYCC2). Interacts with PI4KA, interaction is direct. Interacts with EFR3 (EFR3A or EFR3B), interaction is direct. Interacts with HYCC (HYCC1 or HYCC2), interaction is direct. Association with the PI4K complex is strongly reduced by TMEM150A.

The protein resides in the cytoplasm. The protein localises to the cytosol. Its subcellular location is the cell membrane. Functionally, component of a complex required to localize phosphatidylinositol 4-kinase (PI4K) to the plasma membrane. The complex acts as a regulator of phosphatidylinositol 4-phosphate (PtdIns(4)P) synthesis. In the complex, plays a central role in bridging PI4KA to EFR3B and HYCC1, via direct interactions. The sequence is that of Tetratricopeptide repeat protein 7B from Mus musculus (Mouse).